Reading from the N-terminus, the 588-residue chain is Protein disulfide-isomerase-like protein of the testis (588 aa).

The signal sequence occupies residues 1 to 20; that stretch reads MELLWTPLLLVAACLSEVLG. 3 N-linked (GlcNAc...) asparagine glycosylation sites follow: asparagine 55, asparagine 157, and asparagine 337. Positions 385-448 constitute a Thioredoxin domain; that stretch reads PVKKLVGKNF…IAKIDITAND (64 aa). 3 stretches are compositionally biased toward basic and acidic residues: residues 531-542, 549-567, and 574-588; these read IEDTSKQDRPVK, SIRK…EREA, and EQPK…KEEL. The segment at 531–588 is disordered; that stretch reads IEDTSKQDRPVKESPVLDSIRKPEEPERRKETAEREAAAAQPKEQPKPERKLEVKEEL. Positions 585 to 588 match the Prevents secretion from ER motif; sequence KEEL.

It belongs to the protein disulfide isomerase family. In terms of assembly, homodimer. The homodimer is not disulfide-linked. Interacts with CLGN and ERO1A. N-glycosylated. In terms of tissue distribution, testis-specific (at protein level).

It is found in the endoplasmic reticulum. Probable redox-inactive chaperone involved in spermatogenesis. The protein is Protein disulfide-isomerase-like protein of the testis (Pdilt) of Mus musculus (Mouse).